A 441-amino-acid polypeptide reads, in one-letter code: GTPase Der (441 aa).

EngA-type G domains lie at 2 to 164 and 173 to 343; these read QKVA…PADE and IRIS…EKWQ. GTP is bound by residues 8 to 15, 55 to 59, 116 to 119, 179 to 186, 226 to 230, and 288 to 291; these read GRPNVGKS, DTGGL, NKID, DTAGI, and NKWD. Positions 344 to 428 constitute a KH-like domain; sequence SRIPTAELNR…PVRLKWKEKG (85 aa).

Belongs to the TRAFAC class TrmE-Era-EngA-EngB-Septin-like GTPase superfamily. EngA (Der) GTPase family. In terms of assembly, associates with the 50S ribosomal subunit.

Functionally, GTPase that plays an essential role in the late steps of ribosome biogenesis. This Deinococcus geothermalis (strain DSM 11300 / CIP 105573 / AG-3a) protein is GTPase Der.